Here is a 573-residue protein sequence, read N- to C-terminus: MSEFEDHEGNGTVADAIYDEENGGRDGEIEDQLDSKPKRESRDHERETSRSKDREREKGRDKDRERDSEVSRRSRDRDGEKSKERSRDKDRDHRERHHRSSRHRDHSRERGERRERGGRDDDDYRRSRDRDHDRRRDDRGGRRSRRSRSRSKDRSERRTRSRSPSKSKQRVSGFDMAPPASAMLAAGAAVTGQVPPAPPTLPGAGMFPNMFPLPTGQSFGGLSMMPIQAMTQQATRHARRVYVGGLSPTANEQSVATFFSQVMAAVGGNTAGPGDAVVNVYINHEKKFAFVEMRSVEEASNAMSLDGIIFEGAPVKVRRPSDYNPSLAATLGPSQPSPHLNLAAVGLTPGASGGLEGPDRIFVGGLPYYFTESQVRELLESFGGLKGFDLVKDRETGNSKGYAFCVYQDLSVTDIACAALNGIKMGDKTLTVRRANQGTMLQKPEQENVLLHAQQQIAFQRVMLQPGAVATTVVCLTQVVTEDELRDDEEYGDIMEDMRQEGGKFGALTNVVIPRPSPNGEPVAGLGKVFLKYADTDGSTRARFGMNGRKFGGNEVVAVYYPEDKFEQGDYGA.

The tract at residues 1–175 (MSEFEDHEGN…KSKQRVSGFD (175 aa)) is disordered. The span at 22–93 (NGGRDGEIED…ERSRDKDRDH (72 aa)) shows a compositional bias: basic and acidic residues. Positions 94-105 (RERHHRSSRHRD) are enriched in basic residues. The span at 106–141 (HSRERGERRERGGRDDDDYRRSRDRDHDRRRDDRGG) shows a compositional bias: basic and acidic residues. Over residues 159–169 (TRSRSPSKSKQ) the composition is skewed to basic residues. 3 RRM domains span residues 239–322 (RRVY…RPSD), 359–437 (DRIF…RANQ), and 478–564 (QVVT…YPED).

Belongs to the splicing factor SR family. In terms of assembly, component of the spliceosome. Interacts with SUA. Interacts with SF1 in the nucleus.

It is found in the nucleus. Necessary for the splicing of pre-mRNA. The protein is Splicing factor U2af large subunit A of Arabidopsis thaliana (Mouse-ear cress).